We begin with the raw amino-acid sequence, 395 residues long: S-adenosylmethionine synthase (395 aa).

Residue His-16 participates in ATP binding. Asp-18 provides a ligand contact to Mg(2+). Glu-44 contacts K(+). Residues Glu-57 and Gln-100 each contribute to the L-methionine site. The tract at residues Gln-100 to Glu-110 is flexible loop. ATP-binding positions include Asp-174–Lys-176, Arg-241–Phe-242, Asp-250, Arg-256–Lys-257, Ala-273, and Lys-277. Residue Asp-250 coordinates L-methionine. Lys-281 is an L-methionine binding site.

The protein belongs to the AdoMet synthase family. Homotetramer; dimer of dimers. Requires Mg(2+) as cofactor. K(+) is required as a cofactor.

Its subcellular location is the cytoplasm. The enzyme catalyses L-methionine + ATP + H2O = S-adenosyl-L-methionine + phosphate + diphosphate. It functions in the pathway amino-acid biosynthesis; S-adenosyl-L-methionine biosynthesis; S-adenosyl-L-methionine from L-methionine: step 1/1. Catalyzes the formation of S-adenosylmethionine (AdoMet) from methionine and ATP. The overall synthetic reaction is composed of two sequential steps, AdoMet formation and the subsequent tripolyphosphate hydrolysis which occurs prior to release of AdoMet from the enzyme. This chain is S-adenosylmethionine synthase, found in Streptococcus uberis (strain ATCC BAA-854 / 0140J).